The sequence spans 91 residues: Chorion class B protein M3A5 (91 aa).

A central domain region spans residues 1–51 (VASENRYEGTVGVSGNLPFLGTADVAGEFPTAGIGEILYGCGNGAVGITRE). The interval 52-91 (GGLGYGAGYGGGYGLGYGGYGGGYGLGYGGYGGCGCGCGY) is right arm (Gly-rich tandem repeats).

Belongs to the chorion protein family.

In terms of biological role, this protein is one of many from the eggshell of the silk moth. The sequence is that of Chorion class B protein M3A5 from Bombyx mori (Silk moth).